Here is a 497-residue protein sequence, read N- to C-terminus: Aluminum-activated malate transporter 10 (497 aa).

6 helical membrane passes run 66–86 (KVVHCLKVGLALSLVSIFYYM), 88–108 (PLYDGVGGNAMWAIMTVVVVF), 123–143 (VVATILAGSLGIAVHWVATQS), 148–168 (VFVIGCSVFLFAFAATYSRFV), 173–193 (ARFDYGAMIFILTFSLVSVGG), and 210–230 (IAIGTSICIIITVFFCPIWAG). Disordered stretches follow at residues 413–437 (PIETNKPEEVPSEEENKVDSEERTT) and 476–497 (DFEQDSKKKTGDNNTKQPPLSS). Basic and acidic residues predominate over residues 417–436 (NKPEEVPSEEENKVDSEERT). Polar residues predominate over residues 487-497 (DNNTKQPPLSS).

This sequence belongs to the aromatic acid exporter (TC 2.A.85) family.

The protein localises to the membrane. Its function is as follows. Malate transporter. This chain is Aluminum-activated malate transporter 10 (ALMT10), found in Arabidopsis thaliana (Mouse-ear cress).